A 224-amino-acid polypeptide reads, in one-letter code: MNSAWALLRLASPQLPIGGYSYSQGLEMAVEQSIVIDPQTAGRWIGDQLLLNLARFEAPLLLAHCEAAAVGDWGQLLQVSEQHRASRETRELHQESRQMGYSLQQLLNGLPELDRDARRFLEQTTEPHLALGWALAARTWRISPQDALAAWLWSWLENQLAVLMKTLPLGQQAAQRLTSELLPLLQQAQVNASAQDTHPAGSAAFGLALASMAHERQYSRLFRS.

This sequence belongs to the UreF family. As to quaternary structure, ureD, UreF and UreG form a complex that acts as a GTP-hydrolysis-dependent molecular chaperone, activating the urease apoprotein by helping to assemble the nickel containing metallocenter of UreC. The UreE protein probably delivers the nickel.

The protein localises to the cytoplasm. Its function is as follows. Required for maturation of urease via the functional incorporation of the urease nickel metallocenter. The protein is Urease accessory protein UreF 2 of Pseudomonas syringae pv. tomato (strain ATCC BAA-871 / DC3000).